Here is a 317-residue protein sequence, read N- to C-terminus: Serpentine receptor class delta-46 (317 aa).

7 helical membrane passes run 9-29 (FYII…YVII), 42-62 (IFLC…LLQA), 91-111 (YVLC…TMYV), 129-149 (VIIL…YLTI), 185-205 (QIVF…MFCL), 239-259 (AFLP…ALIT), and 269-289 (FVSV…FYTV).

It belongs to the nematode receptor-like protein srd family.

The protein resides in the membrane. The polypeptide is Serpentine receptor class delta-46 (srd-46) (Caenorhabditis elegans).